The chain runs to 370 residues: Anhydro-N-acetylmuramic acid kinase (370 aa).

12–19 (GTSLDGVD) lines the ATP pocket.

The protein belongs to the anhydro-N-acetylmuramic acid kinase family.

It catalyses the reaction 1,6-anhydro-N-acetyl-beta-muramate + ATP + H2O = N-acetyl-D-muramate 6-phosphate + ADP + H(+). Its pathway is amino-sugar metabolism; 1,6-anhydro-N-acetylmuramate degradation. It functions in the pathway cell wall biogenesis; peptidoglycan recycling. Functionally, catalyzes the specific phosphorylation of 1,6-anhydro-N-acetylmuramic acid (anhMurNAc) with the simultaneous cleavage of the 1,6-anhydro ring, generating MurNAc-6-P. Is required for the utilization of anhMurNAc either imported from the medium or derived from its own cell wall murein, and thus plays a role in cell wall recycling. The chain is Anhydro-N-acetylmuramic acid kinase from Proteus mirabilis (strain HI4320).